The primary structure comprises 246 residues: Hsp70 nucleotide exchange factor fes-1 (246 aa).

Residues Q23–A40 are compositionally biased toward polar residues. The disordered stretch occupies residues Q23–D63. 4 ARM repeats span residues T48–P92, L113–Q152, Q155–R196, and H214–K244.

It belongs to the FES1 family.

It is found in the cytoplasm. Its function is as follows. Functions as a nucleotide exchange factor (NEF) for Hsp70 chaperones which accelerates the release of ADP. Required for fully efficient Hsp70-mediated folding of proteins. This Neurospora crassa (strain ATCC 24698 / 74-OR23-1A / CBS 708.71 / DSM 1257 / FGSC 987) protein is Hsp70 nucleotide exchange factor fes-1 (fes-1).